The sequence spans 217 residues: MKSTVEQAMLFEEKSIFENQAIEQGYSRVAGVDEAGRGPLAGPVVAGACILPRGKVFLGIDDSKKLTPKQRRYLYELLLEDPEVDCGVGVVSVERIDEINILEATKEAMVQAIASLQSTPDFLLVDGLFLPHKVPSLKIIKGDARSVSIAAASIIAKEYRDELMRKLHVEYPEYGFDKHKGYGTAAHLQALKHFGPCVYHRKSFSPVKESIQEGVCQ.

The region spanning 27 to 216 is the RNase H type-2 domain; it reads SRVAGVDEAG…VKESIQEGVC (190 aa). 3 residues coordinate a divalent metal cation: Asp33, Glu34, and Asp126.

It belongs to the RNase HII family. Requires Mn(2+) as cofactor. It depends on Mg(2+) as a cofactor.

Its subcellular location is the cytoplasm. The enzyme catalyses Endonucleolytic cleavage to 5'-phosphomonoester.. Endonuclease that specifically degrades the RNA of RNA-DNA hybrids. The chain is Ribonuclease HII from Chlamydia trachomatis serovar A (strain ATCC VR-571B / DSM 19440 / HAR-13).